Reading from the N-terminus, the 364-residue chain is Transposase for insertion sequence element IS1111A (364 aa).

Belongs to the transposase IS1111A/IS1328/IS1533 family.

Required for the transposition of the insertion element. In Coxiella burnetii (strain RSA 493 / Nine Mile phase I), this protein is Transposase for insertion sequence element IS1111A.